We begin with the raw amino-acid sequence, 204 residues long: Recombination protein RecR (204 aa).

The C4-type zinc-finger motif lies at 59 to 74 (CTRCNTFTELEICGTC). The Toprim domain maps to 82–181 (TLLCVVETPA…KVSRLARGVP (100 aa)).

Belongs to the RecR family.

Functionally, may play a role in DNA repair. It seems to be involved in an RecBC-independent recombinational process of DNA repair. It may act with RecF and RecO. The sequence is that of Recombination protein RecR from Cupriavidus metallidurans (strain ATCC 43123 / DSM 2839 / NBRC 102507 / CH34) (Ralstonia metallidurans).